The chain runs to 151 residues: Proteolipid protein 2 (151 aa).

The region spanning 19-137 (FSRTKKGILL…DAYITFPLKQ (119 aa)) is the MARVEL domain. Transmembrane regions (helical) follow at residues 25–45 (GILL…FSAS), 48–68 (AYSS…VFYM), 85–105 (FFRS…VLVE), and 112–132 (IVAG…AYIT).

It is found in the membrane. In terms of biological role, may play a role in cell differentiation in the intestinal epithelium. The polypeptide is Proteolipid protein 2 (Plp2) (Rattus norvegicus (Rat)).